A 937-amino-acid chain; its full sequence is MEKGVEKTQIIDYDGNVIEDLKEWMIDNKLNDLGFSYNVIAVLGSQSSGKSTLLNNLFKTSFDVMNTKQGHSQTTKGLWLSYDKFDDETNNSSSFFKLKKKNKPTLILDVEGTDSKERGDNRLTFEHRSALFCLALADCVIVNLWYHSLGNFTASNYGLLKTVMEVNLELFQQEKNSPKTILLFTVRDWFEEFAPIEVVRNKILDEYINKIWKEMKKPKEAEKLNINNFFIIEVVGLSHGIIKKEDFLKDVNNLRDKWINNLRPSKYSRNIPSDGFAQYCNNIWNTIVKQSQLDIPSQKEMLSTFRCQEIKNNVINNINKEIKEKSIESHNKVIENFKEWAEKNIIQKCLDDYFKDASRYKENICLRTSQELLDYLFTQLQAIVDNNLQYIQRTLCTKFFNELSNMYKICTIEKNTFSFSRDSNLKTVKDNNKNTSHEDIKRDLLNNNQDKCVHLWSNFLYNADKLEYFTFCNFYENYEKSNIEIKTNMKNDDNLKNDDNLKNDAHNNITTHQFNYKPTLSVLSTSIYKDSNRIRNIQCGILLNKTRQTIKNSFKNMDTYLLTTKNTEEYWNNTVQLVLKLQDNINTHLTKCFINLKGTNHNNLNIYNDDMMYNNDDMVFNNNDDDDNNNNNNNNNYYYYNKNDDANLSKDENYNNKFSFSLTNEKGIFQNINNNNEGSDEICYTNALKKIDLIKNKQVYKSTINEDINNKLQNKKYIHELKNYYLDEIMDVLKNKLDEISENLATIIIQRFESVFNYDEYEQPRQWRDISMAELKKIFLKSKNYAFLIIDILQKNIKVELIDDYLPNNFIKDEIIEKGKIKAKRRIQEICRDAQYIQETGSKMSLKNVPVVFWIILLLFGWNEILFFIRMFFKLNVILPLFFAAAFIVSTFVYNGNTQALSYINKIIFYMAKNSYNFFKHIQAISNPPPKNVQKQE.

The Cytoplasmic portion of the chain corresponds to 1–848 (MEKGVEKTQI…ETGSKMSLKN (848 aa)). Positions 34–280 (GFSYNVIAVL…IPSDGFAQYC (247 aa)) constitute a GB1/RHD3-type G domain. 44–51 (GSQSSGKS) provides a ligand contact to GTP. 2 coiled-coil regions span residues 319–339 (NKEIKEKSIESHNKVIENFKE) and 725–750 (YLDEIMDVLKNKLDEISENLATIIIQ). Residues 849 to 869 (VPVVFWIILLLFGWNEILFFI) form a helical membrane-spanning segment. Residues 870 to 872 (RMF) are Lumenal-facing. The helical transmembrane segment at 873–893 (FKLNVILPLFFAAAFIVSTFV) threads the bilayer. Residues 894–937 (YNGNTQALSYINKIIFYMAKNSYNFFKHIQAISNPPPKNVQKQE) are Cytoplasmic-facing.

This sequence belongs to the TRAFAC class dynamin-like GTPase superfamily. GB1/RHD3 GTPase family. RHD3 subfamily.

The protein localises to the endoplasmic reticulum membrane. Probable GTP-binding protein involved in generating and maintaining the structure of the tubular endoplasmic reticulum network. This chain is Protein SEY1 homolog, found in Plasmodium falciparum (isolate 3D7).